A 278-amino-acid polypeptide reads, in one-letter code: HTH-type transcriptional activator RhaS (278 aa).

The region spanning 174-272 (NQLMAWLEDH…NWSPRDIRQG (99 aa)) is the HTH araC/xylS-type domain. 2 DNA-binding regions (H-T-H motif) span residues 191–212 (EAVA…KQHT) and 239–262 (VTEI…RREF).

Binds DNA as a dimer.

It is found in the cytoplasm. Activates expression of the rhaBAD and rhaT operons. The polypeptide is HTH-type transcriptional activator RhaS (Salmonella agona (strain SL483)).